The sequence spans 305 residues: Glycine--tRNA ligase alpha subunit (305 aa).

It belongs to the class-II aminoacyl-tRNA synthetase family. As to quaternary structure, tetramer of two alpha and two beta subunits.

The protein localises to the cytoplasm. It carries out the reaction tRNA(Gly) + glycine + ATP = glycyl-tRNA(Gly) + AMP + diphosphate. In Vibrio vulnificus (strain CMCP6), this protein is Glycine--tRNA ligase alpha subunit.